Reading from the N-terminus, the 68-residue chain is DNA gyrase inhibitor YacG (68 aa).

Zn(2+) is bound by residues cysteine 12, cysteine 15, cysteine 30, and cysteine 34. Residues 48–68 (KLKTQDAPTSGKGQHSDDYED) form a disordered region.

Belongs to the DNA gyrase inhibitor YacG family. In terms of assembly, interacts with GyrB. Zn(2+) serves as cofactor.

Functionally, inhibits all the catalytic activities of DNA gyrase by preventing its interaction with DNA. Acts by binding directly to the C-terminal domain of GyrB, which probably disrupts DNA binding by the gyrase. This Acinetobacter baylyi (strain ATCC 33305 / BD413 / ADP1) protein is DNA gyrase inhibitor YacG.